The sequence spans 225 residues: MNSPIEKLTRQLGYQFQDDELLNLALTHRSANSKHNERLEFLGDSILSFVIADELYHRFPKVNEGDMSRMRATLVRGNTLAELGREFGLGDYLKLGPGELKSGGFRRDSILADAVEAIIGAVYLDSDLEVVRGIVLNWYASRLEAIKPGVSQKDPKTRLQEFLQGRRKPLPVYTVTNIKGEAHNQEFTVECDIAGMDKPVVGRGTSRRKAEQAAAELALEQLTNG.

Residues 5-127 form the RNase III domain; sequence IEKLTRQLGY…IIGAVYLDSD (123 aa). A Mg(2+)-binding site is contributed by glutamate 40. Residue aspartate 44 is part of the active site. Residues aspartate 113 and glutamate 116 each contribute to the Mg(2+) site. Residue glutamate 116 is part of the active site. Residues 154 to 224 enclose the DRBM domain; the sequence is DPKTRLQEFL…AELALEQLTN (71 aa).

This sequence belongs to the ribonuclease III family. As to quaternary structure, homodimer. Mg(2+) is required as a cofactor.

The protein resides in the cytoplasm. The enzyme catalyses Endonucleolytic cleavage to 5'-phosphomonoester.. Functionally, digests double-stranded RNA. Involved in the processing of primary rRNA transcript to yield the immediate precursors to the large and small rRNAs (23S and 16S). Processes some mRNAs, and tRNAs when they are encoded in the rRNA operon. Processes pre-crRNA and tracrRNA of type II CRISPR loci if present in the organism. This Vibrio vulnificus (strain YJ016) protein is Ribonuclease 3.